Here is a 439-residue protein sequence, read N- to C-terminus: Tol-Pal system protein TolB (439 aa).

The first 22 residues, methionine 1–alanine 22, serve as a signal peptide directing secretion.

The protein belongs to the TolB family. The Tol-Pal system is composed of five core proteins: the inner membrane proteins TolA, TolQ and TolR, the periplasmic protein TolB and the outer membrane protein Pal. They form a network linking the inner and outer membranes and the peptidoglycan layer.

It is found in the periplasm. Functionally, part of the Tol-Pal system, which plays a role in outer membrane invagination during cell division and is important for maintaining outer membrane integrity. This chain is Tol-Pal system protein TolB, found in Xanthomonas oryzae pv. oryzae (strain MAFF 311018).